Here is a 336-residue protein sequence, read N- to C-terminus: MNIVVIGAGAWGTALAMSAAARGDGRVVTLWARDAAQAQAMRDSGENARYLPGVALPAALQVVHGEIDGHLAAADLIVIGTPMAALREWLGRLQHVPAPVAWLCKGFEAVPAGASAAAHGLMAHEVCAEVAPDLLCGVLSGPSFAAEVARHQPTALVAASRHAEVNDALVAAFHGDAMRVYANADIVGVEVGGAVKNVLAIATGLCDGLQLGLNARAALITRGLAEMTRLGLALGARTETFMGLSGLGDLVLTATGDLSRNRKVGLLLAQGRTLEQAVASLGHVAEGVYSARTVLARARLLNVEMPITETVVELLDGRLQAAEAVQHLMARDPRGE.

NADPH contacts are provided by W11, R33, and K105. 3 residues coordinate sn-glycerol 3-phosphate: K105, G141, and S143. Position 145 (A145) interacts with NADPH. Positions 196, 249, 259, 260, and 261 each coordinate sn-glycerol 3-phosphate. K196 serves as the catalytic Proton acceptor. R260 lines the NADPH pocket. The NADPH site is built by V284 and E286.

The protein belongs to the NAD-dependent glycerol-3-phosphate dehydrogenase family.

The protein resides in the cytoplasm. The catalysed reaction is sn-glycerol 3-phosphate + NAD(+) = dihydroxyacetone phosphate + NADH + H(+). It catalyses the reaction sn-glycerol 3-phosphate + NADP(+) = dihydroxyacetone phosphate + NADPH + H(+). It functions in the pathway membrane lipid metabolism; glycerophospholipid metabolism. Catalyzes the reduction of the glycolytic intermediate dihydroxyacetone phosphate (DHAP) to sn-glycerol 3-phosphate (G3P), the key precursor for phospholipid synthesis. This is Glycerol-3-phosphate dehydrogenase [NAD(P)+] from Delftia acidovorans (strain DSM 14801 / SPH-1).